The sequence spans 387 residues: 8-amino-7-oxononanoate synthase (387 aa).

Positions 31 and 38 each coordinate substrate. 118–119 lines the pyridoxal 5'-phosphate pocket; it reads GY. H143 is a substrate binding site. Residues S191, 216–219, and 236–239 each bind pyridoxal 5'-phosphate; these read DDAH and TLSK. At K239 the chain carries N6-(pyridoxal phosphate)lysine. A substrate-binding site is contributed by T348.

This sequence belongs to the class-II pyridoxal-phosphate-dependent aminotransferase family. BioF subfamily. Homodimer. It depends on pyridoxal 5'-phosphate as a cofactor.

It carries out the reaction 6-carboxyhexanoyl-[ACP] + L-alanine + H(+) = (8S)-8-amino-7-oxononanoate + holo-[ACP] + CO2. The protein operates within cofactor biosynthesis; biotin biosynthesis. Its function is as follows. Catalyzes the decarboxylative condensation of pimeloyl-[acyl-carrier protein] and L-alanine to produce 8-amino-7-oxononanoate (AON), [acyl-carrier protein], and carbon dioxide. The sequence is that of 8-amino-7-oxononanoate synthase from Methylorubrum populi (strain ATCC BAA-705 / NCIMB 13946 / BJ001) (Methylobacterium populi).